The sequence spans 60 residues: UPF0434 protein HCH_02705 (60 aa).

The protein belongs to the UPF0434 family.

The protein is UPF0434 protein HCH_02705 of Hahella chejuensis (strain KCTC 2396).